A 229-amino-acid chain; its full sequence is Aminodeoxyfutalosine nucleosidase (229 aa).

Residue glutamate 13 is the Proton acceptor of the active site. Substrate-binding positions include glycine 79, isoleucine 153, and 173–174; that span reads ME. Aspartate 197 acts as the Proton donor in catalysis.

It belongs to the PNP/UDP phosphorylase family. In terms of assembly, homodimer.

It carries out the reaction 6-amino-6-deoxyfutalosine + H2O = dehypoxanthine futalosine + adenine. The catalysed reaction is S-adenosyl-L-homocysteine + H2O = S-(5-deoxy-D-ribos-5-yl)-L-homocysteine + adenine. The enzyme catalyses S-methyl-5'-thioadenosine + H2O = 5-(methylsulfanyl)-D-ribose + adenine. It catalyses the reaction 5'-deoxyadenosine + H2O = 5-deoxy-D-ribose + adenine. It functions in the pathway quinol/quinone metabolism; menaquinone biosynthesis. Its pathway is amino-acid biosynthesis; L-methionine biosynthesis via salvage pathway; S-methyl-5-thio-alpha-D-ribose 1-phosphate from S-methyl-5'-thioadenosine (hydrolase route): step 1/2. In terms of biological role, catalyzes the direct conversion of aminodeoxyfutalosine (AFL) into dehypoxanthine futalosine (DHFL) and adenine via the hydrolysis of the N-glycosidic bond; this reaction seems to represent an essential step in the menaquinone biosynthesis pathway in Campylobacter species. Also catalyzes the hydrolysis of 5'-methylthioadenosine (MTA) to adenine and 5'-methylthioribose. Can also probably use S-adenosylhomocysteine (SAH) as substrate, leading to adenine and S-ribosylhomocysteine. These other activities highlight the tremendous versatility of the enzyme, which also plays key roles in S-adenosylmethionine recycling and in the biosynthesis of the quorum-sensing molecule autoinducer-2. Shows negligible activity with futalosine (FL) as substrate. The sequence is that of Aminodeoxyfutalosine nucleosidase (pfs) from Campylobacter jejuni subsp. jejuni serotype O:2 (strain ATCC 700819 / NCTC 11168).